The sequence spans 756 residues: MSTESKCPFNHAAGGGTTNRDWWPKQLNLKILHQHSSLSDPMGEDFDYAKEFKSLDFEAVKQDLRDVMTRSQDWWPADFGHYGPLFIRMAWHSAGTYRTGDGRGGAGAGQQRFAPLNSWPDNVSLDKARRLIWPVKQKYGRKISWADLIVLTGNVALESMGFKTFGFSGGRPDVWEPEEDVYWGSETTWLGGEERYGAQKKMQQPGDGTLVAEPENHANEESRTASGERNLENPLAAVQMGLIYVNPEGPEGVPDPVASARDIRETFGRMAMNDEETVALIAGGHAFGKTHGAGPADNVGPEPEAAGLEQQGFGWSNKFGTGKGGDTITSGLEVTWTSTPTQWSNEYLENLFAFDWELTKSPAGAHQWTPKNGAGAGKIPDAHDPSKRHAPSMLTSDLALRFDPAYEQISRRFLANPEQLADAFARAWFKLTHRDMGPLARYLGPETPTEELLWQDPIPDVTHPLVDDQDVAALKGKILDSGLSVSQLVSTAWAAASTFRGSDKRGGANGGRLRLAPQKDWAVNQPAQLANVLSTLESIQSEFNAAQSNGKKVSIADLIVLAGSAGVEQAAKNAGQQVTVPFTAGRADASQEQTDVESFSFLEPIADGFRNYQKGRYKVSAESLLVDKAQLLTLTAPEMTVLLGGLRVLNINVGQSKHGVFTDKPETLTNDFFKNLLDMAVEWKATSGANDTFEARDRKTGEVKWTGSRVDLVFGSHAQLRAISEVYGSADAQERFVKDFVAVWTKVMNLDRFDLA.

The segment at residues 91-244 (WHSAGTYRTG…LAAVQMGLIY (154 aa)) is a cross-link (tryptophyl-tyrosyl-methioninium (Trp-Tyr) (with M-270)). The Proton acceptor role is filled by H92. The tract at residues 198–230 (AQKKMQQPGDGTLVAEPENHANEESRTASGERN) is disordered. Over residues 214–223 (PENHANEESR) the composition is skewed to basic and acidic residues. Positions 244-270 (YVNPEGPEGVPDPVASARDIRETFGRM) form a cross-link, tryptophyl-tyrosyl-methioninium (Tyr-Met) (with W-91). H285 contributes to the heme b binding site. The tract at residues 371–390 (KNGAGAGKIPDAHDPSKRHA) is disordered.

The protein belongs to the peroxidase family. Peroxidase/catalase subfamily. Homodimer or homotetramer. It depends on heme b as a cofactor. Formation of the three residue Trp-Tyr-Met cross-link is important for the catalase, but not the peroxidase activity of the enzyme.

The catalysed reaction is H2O2 + AH2 = A + 2 H2O. It carries out the reaction 2 H2O2 = O2 + 2 H2O. Its function is as follows. Bifunctional enzyme with both catalase and broad-spectrum peroxidase activity. The chain is Catalase-peroxidase from Pseudomonas syringae pv. tomato (strain ATCC BAA-871 / DC3000).